The chain runs to 362 residues: Putative gustatory receptor 89a (362 aa).

Residues 1 to 38 are Cytoplasmic-facing; it reads MLRFPHVCGLCLLLKYWQILALAPFRTSEPMVARCQRW. A helical membrane pass occupies residues 39 to 59; it reads MTLIAVFRWLLLTSMAPFVLW. Residues 60–74 are Extracellular-facing; the sequence is KSAAMYEATNVRHSM. A helical membrane pass occupies residues 75–95; the sequence is VFKTIALATMTGDVCISLALL. At 96–126 the chain is on the cytoplasmic side; the sequence is GNHLWNRRELANLVNDLARLHRRRRLSWWST. Residues 127-147 form a helical membrane-spanning segment; the sequence is LFLWLKLLLSLYDLLCSVPFL. At 148 to 166 the chain is on the extracellular side; it reads KGAGGRLPWSQLVAYGVQL. Residues 167 to 187 traverse the membrane as a helical segment; the sequence is YFQHVASVYGNGIFGGILLML. Residues 188-223 are Cytoplasmic-facing; it reads ECYNQLEREEPTNLARLLQKEYSWLRLIQRFVKLFQ. A helical membrane pass occupies residues 224–244; sequence LGIFLLVLGSFVNIMVNIYAF. The Extracellular portion of the chain corresponds to 245–255; it reads MSYYVSLHGVP. Residues 256–276 form a helical membrane-spanning segment; it reads LTISNNCLVLAIQLYAVILAA. The Cytoplasmic portion of the chain corresponds to 277–333; the sequence is HLCQVRSAKLRKKCLQLEYVPEGLTQEQAMASTPFPVLTPTGNVKFRILGVFILDNS. Residues 334-354 traverse the membrane as a helical segment; it reads FWLFLVSYAMNFIVVILQTSF. The Extracellular segment spans residues 355 to 362; sequence EHINHGEI.

It belongs to the insect chemoreceptor superfamily. Gustatory receptor (GR) family. Gr77a subfamily.

The protein resides in the cell membrane. In terms of biological role, probable gustatory receptor which mediates acceptance or avoidance behavior, depending on its substrates. The polypeptide is Putative gustatory receptor 89a (Gr89a) (Drosophila melanogaster (Fruit fly)).